The sequence spans 256 residues: Thiazole synthase (256 aa).

Residue Lys98 is the Schiff-base intermediate with DXP of the active site. 1-deoxy-D-xylulose 5-phosphate is bound by residues Gly159, 185 to 186, and 207 to 208; these read AG and NT.

This sequence belongs to the ThiG family. As to quaternary structure, homotetramer. Forms heterodimers with either ThiH or ThiS.

The protein resides in the cytoplasm. It catalyses the reaction [ThiS sulfur-carrier protein]-C-terminal-Gly-aminoethanethioate + 2-iminoacetate + 1-deoxy-D-xylulose 5-phosphate = [ThiS sulfur-carrier protein]-C-terminal Gly-Gly + 2-[(2R,5Z)-2-carboxy-4-methylthiazol-5(2H)-ylidene]ethyl phosphate + 2 H2O + H(+). It functions in the pathway cofactor biosynthesis; thiamine diphosphate biosynthesis. Functionally, catalyzes the rearrangement of 1-deoxy-D-xylulose 5-phosphate (DXP) to produce the thiazole phosphate moiety of thiamine. Sulfur is provided by the thiocarboxylate moiety of the carrier protein ThiS. In vitro, sulfur can be provided by H(2)S. The chain is Thiazole synthase from Aliivibrio salmonicida (strain LFI1238) (Vibrio salmonicida (strain LFI1238)).